Consider the following 76-residue polypeptide: Centromere protein W (76 aa).

The protein belongs to the CENP-W/WIP1 family. Heterodimer with CENPT; this dimer coassembles with CENPS-CENPX heterodimers at centromeres to form the tetrameric CENP-T-W-S-X complex, which is a subcomplex of the large constitutive centromere-associated network (CCAN, also known as the interphase centromere complex or ICEN). Interacts with NPM1.

It is found in the nucleus. The protein localises to the chromosome. The protein resides in the centromere. It localises to the kinetochore. Its function is as follows. Component of the CENPA-NAC (nucleosome-associated) complex, a complex that plays a central role in assembly of kinetochore proteins, mitotic progression and chromosome segregation. The CENPA-NAC complex recruits the CENPA-CAD (nucleosome distal) complex and may be involved in incorporation of newly synthesized CENPA into centromeres. Part of a nucleosome-associated complex that binds specifically to histone H3-containing nucleosomes at the centromere, as opposed to nucleosomes containing CENPA. Component of the heterotetrameric CENP-T-W-S-X complex that binds and supercoils DNA, and plays an important role in kinetochore assembly. CENPW has a fundamental role in kinetochore assembly and function. It is one of the inner kinetochore proteins, with most further proteins binding downstream. Required for normal chromosome organization and normal progress through mitosis. The protein is Centromere protein W (CENPW) of Gallus gallus (Chicken).